The following is a 300-amino-acid chain: tRNA dimethylallyltransferase 1 (300 aa).

10–17 (GPTGVGKT) contributes to the ATP binding site. 12 to 17 (TGVGKT) contacts substrate. Residues 35–38 (DSRQ) form an interaction with substrate tRNA region.

The protein belongs to the IPP transferase family. In terms of assembly, monomer. Requires Mg(2+) as cofactor.

It catalyses the reaction adenosine(37) in tRNA + dimethylallyl diphosphate = N(6)-dimethylallyladenosine(37) in tRNA + diphosphate. Catalyzes the transfer of a dimethylallyl group onto the adenine at position 37 in tRNAs that read codons beginning with uridine, leading to the formation of N6-(dimethylallyl)adenosine (i(6)A). In Phocaeicola vulgatus (strain ATCC 8482 / DSM 1447 / JCM 5826 / CCUG 4940 / NBRC 14291 / NCTC 11154) (Bacteroides vulgatus), this protein is tRNA dimethylallyltransferase 1.